A 2104-amino-acid polypeptide reads, in one-letter code: Protein Ycf2 (2104 aa).

Residue 1396-1403 (GPVETGRS) coordinates ATP.

This sequence belongs to the Ycf2 family.

The protein resides in the plastid. The protein localises to the chloroplast stroma. In terms of biological role, probable ATPase of unknown function. Its presence in a non-photosynthetic plant (Epifagus virginiana) and experiments in tobacco indicate that it has an essential function which is probably not related to photosynthesis. The polypeptide is Protein Ycf2 (ycf2-A) (Adiantum capillus-veneris (Maidenhair fern)).